An 832-amino-acid polypeptide reads, in one-letter code: Protein P (832 aa).

The interval 1-177 is terminal protein domain (TP); that stretch reads MPLSYQHFRK…FCGSPYSWEQ (177 aa). The spacer stretch occupies residues 178–335; that stretch reads ELQHGAESFH…YCLSHIVNLL (158 aa). The segment covering 186-206 has biased composition (polar residues); sequence FHQQSSGILSRPSVGSSLQSK. Disordered stretches follow at residues 186–255 and 280–305; these read FHQQ…GHNA and TSEN…RSQS. A compositionally biased stretch (low complexity) spans 210–220; that stretch reads SRLGLQSQQGH. Residues 336–679 are polymerase/reverse transcriptase domain (RT); it reads EDWGPCAEHG…YLNLYPVARQ (344 aa). The region spanning 346-589 is the Reverse transcriptase domain; sequence EHHIRIPRTP…YSLNFMGYVI (244 aa). Mg(2+)-binding residues include D418, D540, and D541.

The protein belongs to the hepadnaviridae P protein family.

It catalyses the reaction DNA(n) + a 2'-deoxyribonucleoside 5'-triphosphate = DNA(n+1) + diphosphate. It carries out the reaction Endonucleolytic cleavage to 5'-phosphomonoester.. With respect to regulation, activated by host HSP70 and HSP40 in vitro to be able to bind the epsilon loop of the pgRNA. Because deletion of the RNase H region renders the protein partly chaperone-independent, the chaperones may be needed indirectly to relieve occlusion of the RNA-binding site by this domain. Inhibited by several reverse-transcriptase inhibitors: Lamivudine, Adefovir and Entecavir. Multifunctional enzyme that converts the viral RNA genome into dsDNA in viral cytoplasmic capsids. This enzyme displays a DNA polymerase activity that can copy either DNA or RNA templates, and a ribonuclease H (RNase H) activity that cleaves the RNA strand of RNA-DNA heteroduplexes in a partially processive 3'- to 5'-endonucleasic mode. Neo-synthesized pregenomic RNA (pgRNA) are encapsidated together with the P protein, and reverse-transcribed inside the nucleocapsid. Initiation of reverse-transcription occurs first by binding the epsilon loop on the pgRNA genome, and is initiated by protein priming, thereby the 5'-end of (-)DNA is covalently linked to P protein. Partial (+)DNA is synthesized from the (-)DNA template and generates the relaxed circular DNA (RC-DNA) genome. After budding and infection, the RC-DNA migrates in the nucleus, and is converted into a plasmid-like covalently closed circular DNA (cccDNA). The activity of P protein does not seem to be necessary for cccDNA generation, and is presumably released from (+)DNA by host nuclear DNA repair machinery. The sequence is that of Protein P from Hepatitis B virus genotype D subtype ayw (isolate Australia/AustKW/1991) (HBV-D).